The following is a 340-amino-acid chain: Heat-inducible transcription repressor HrcA (340 aa).

It belongs to the HrcA family.

Its function is as follows. Negative regulator of class I heat shock genes (grpE-dnaK-dnaJ and groELS operons). Prevents heat-shock induction of these operons. This is Heat-inducible transcription repressor HrcA from Mycoplasma capricolum subsp. capricolum (strain California kid / ATCC 27343 / NCTC 10154).